The sequence spans 284 residues: Bifunctional protein FolD (284 aa).

Residues 166-168 and Ile-232 contribute to the NADP(+) site; that span reads GAS.

It belongs to the tetrahydrofolate dehydrogenase/cyclohydrolase family. As to quaternary structure, homodimer.

The enzyme catalyses (6R)-5,10-methylene-5,6,7,8-tetrahydrofolate + NADP(+) = (6R)-5,10-methenyltetrahydrofolate + NADPH. The catalysed reaction is (6R)-5,10-methenyltetrahydrofolate + H2O = (6R)-10-formyltetrahydrofolate + H(+). The protein operates within one-carbon metabolism; tetrahydrofolate interconversion. Its function is as follows. Catalyzes the oxidation of 5,10-methylenetetrahydrofolate to 5,10-methenyltetrahydrofolate and then the hydrolysis of 5,10-methenyltetrahydrofolate to 10-formyltetrahydrofolate. The sequence is that of Bifunctional protein FolD from Shewanella baltica (strain OS223).